Consider the following 308-residue polypeptide: Ornithine carbamoyltransferase (308 aa).

Carbamoyl phosphate-binding positions include 56-59 (STRT), Gln83, Arg107, and 134-137 (HPCQ). Residues Asn165, Asp225, and 229–230 (SM) each bind L-ornithine. Residues 266–267 (CL) and Arg294 each bind carbamoyl phosphate.

Belongs to the aspartate/ornithine carbamoyltransferase superfamily. OTCase family.

The protein localises to the cytoplasm. The catalysed reaction is carbamoyl phosphate + L-ornithine = L-citrulline + phosphate + H(+). It participates in amino-acid degradation; L-arginine degradation via ADI pathway; carbamoyl phosphate from L-arginine: step 2/2. In terms of biological role, reversibly catalyzes the transfer of the carbamoyl group from carbamoyl phosphate (CP) to the N(epsilon) atom of ornithine (ORN) to produce L-citrulline. This chain is Ornithine carbamoyltransferase, found in Cereibacter sphaeroides (strain KD131 / KCTC 12085) (Rhodobacter sphaeroides).